The primary structure comprises 162 residues: Cyclic pyranopterin monophosphate synthase (162 aa).

Residues Leu-75–His-77 and Met-113–Glu-114 contribute to the substrate site. Asp-128 is an active-site residue.

This sequence belongs to the MoaC family. As to quaternary structure, homohexamer; trimer of dimers.

The enzyme catalyses (8S)-3',8-cyclo-7,8-dihydroguanosine 5'-triphosphate = cyclic pyranopterin phosphate + diphosphate. Its pathway is cofactor biosynthesis; molybdopterin biosynthesis. Its function is as follows. Catalyzes the conversion of (8S)-3',8-cyclo-7,8-dihydroguanosine 5'-triphosphate to cyclic pyranopterin monophosphate (cPMP). The polypeptide is Cyclic pyranopterin monophosphate synthase (Burkholderia cenocepacia (strain ATCC BAA-245 / DSM 16553 / LMG 16656 / NCTC 13227 / J2315 / CF5610) (Burkholderia cepacia (strain J2315))).